The chain runs to 210 residues: Glutathione S-transferase P 1 (210 aa).

The GST N-terminal domain maps to 2-81; the sequence is PPYTIVYFPV…HLGRSLGLYG (80 aa). Tyr4 carries the post-translational modification Phosphotyrosine; by EGFR. Residues Tyr8, Arg14, Trp39, Lys45, and 52–53 each bind glutathione; that span reads QL. A Phosphothreonine modification is found at Thr62. Residue 65–66 participates in glutathione binding; it reads QS. A GST C-terminal domain is found at 83 to 204; sequence NQREAAQMDM…SSPEHVNRPI (122 aa). An N6-succinyllysine mark is found at Lys103 and Lys116. Residue Lys128 is modified to N6-acetyllysine.

Homodimer. Interacts with CDK5. Ubiquitously expressed.

The protein localises to the cytoplasm. The protein resides in the mitochondrion. It localises to the nucleus. The catalysed reaction is RX + glutathione = an S-substituted glutathione + a halide anion + H(+). It catalyses the reaction prostaglandin J2 + glutathione = prostaglandin J2-S-(R)-glutathione. The enzyme catalyses prostaglandin J2 + glutathione = prostaglandin J2-S-(S)-glutathione. It carries out the reaction prostaglandin A2 + glutathione = prostaglandin A2-S-(S)-glutathione. The catalysed reaction is 11(S)-hydroxy-14(S),15(S)-epoxy-(5Z,8Z,12E)-eicosatrienoate + glutathione = (11S,15S)-dihydroxy-14(R)-S-glutathionyl-(5Z,8Z,12E)-eicosatrienoate. Its function is as follows. Conjugation of reduced glutathione to a wide number of exogenous and endogenous hydrophobic electrophiles. Involved in the formation of glutathione conjugates of both prostaglandin A2 (PGA2) and prostaglandin J2 (PGJ2). Participates in the formation of novel hepoxilin regioisomers. Negatively regulates CDK5 activity via p25/p35 translocation to prevent neurodegeneration. The polypeptide is Glutathione S-transferase P 1 (Mus musculus (Mouse)).